The following is a 253-amino-acid chain: Trypsin delta (253 aa).

The N-terminal stretch at 1–22 is a signal peptide; it reads MLKFVILLSAVACALGGTVPEG. Residues 23–30 constitute a propeptide, activation peptide; it reads LLPQLDGR. Positions 31-253 constitute a Peptidase S1 domain; sequence IVGGSATTIS…ALRSWVISNA (223 aa). Cysteines 56 and 72 form a disulfide. Residues histidine 71 and aspartate 116 each act as charge relay system in the active site. 2 disulfide bridges follow: cysteine 180–cysteine 197 and cysteine 206–cysteine 230. The active-site Charge relay system is the serine 210.

It belongs to the peptidase S1 family.

It localises to the secreted. Its subcellular location is the extracellular space. It catalyses the reaction Preferential cleavage: Arg-|-Xaa, Lys-|-Xaa.. The chain is Trypsin delta from Drosophila melanogaster (Fruit fly).